Here is a 423-residue protein sequence, read N- to C-terminus: D-tagatose-1,6-bisphosphate aldolase subunit GatZ (423 aa).

It belongs to the GatZ/KbaZ family. GatZ subfamily. Forms a complex with GatY.

It participates in carbohydrate metabolism; D-tagatose 6-phosphate degradation; D-glyceraldehyde 3-phosphate and glycerone phosphate from D-tagatose 6-phosphate: step 2/2. Functionally, component of the tagatose-1,6-bisphosphate aldolase GatYZ that is required for full activity and stability of the Y subunit. Could have a chaperone-like function for the proper and stable folding of GatY. When expressed alone, GatZ does not show any aldolase activity. Is involved in the catabolism of galactitol. This Salmonella gallinarum (strain 287/91 / NCTC 13346) protein is D-tagatose-1,6-bisphosphate aldolase subunit GatZ.